The sequence spans 236 residues: MAKPLYKRVLLKLSGEALAGEKGFGLDTDTINDIAHQISEITDMGVQVAIVVGGGNFWRGRTGEGMDRTTADYMGMMATVINALALQDALENIEILTRVQTAIEMRQIAEPYIRRRAVRHLEKNRVVIFAAGTGNPYFSTDTTAALRAAEIEAEVILLAKNVDGVYDSDPNINPNAQKLQELTYLDVLQQGLKVMDSTATSLCMDNKIPIKVFGLKQSQNIKKVILGEKIGTHIYS.

Lys-12–Gly-15 is an ATP binding site. Residues Gly-20–Gly-25 form an involved in allosteric activation by GTP region. Gly-54 is a UMP binding site. ATP is bound by residues Gly-55 and Arg-59. Residues Asp-72 and Thr-133–Thr-140 each bind UMP. Positions 161, 166, and 169 each coordinate ATP.

It belongs to the UMP kinase family. In terms of assembly, homohexamer.

It localises to the cytoplasm. The catalysed reaction is UMP + ATP = UDP + ADP. Its pathway is pyrimidine metabolism; CTP biosynthesis via de novo pathway; UDP from UMP (UMPK route): step 1/1. With respect to regulation, allosterically activated by GTP. Inhibited by UTP. Its function is as follows. Catalyzes the reversible phosphorylation of UMP to UDP. In Alkaliphilus metalliredigens (strain QYMF), this protein is Uridylate kinase.